Here is a 911-residue protein sequence, read N- to C-terminus: MVKAPQSEERLAGGGKGNNSVLACGAQASWSIFGADAAEVPGTRSHSRQEAAMPHIPEDEEPPGEPQAAQSPAGQDPATTGISCSPPTIILTGDASSPEGETDKNPVNRAHSPHRRLSHRHLKVSTASLTSVDPAGHVIDLVNDQLPDISISEEDKKKNLALLEEAKLVSERFLTRRGRKSRSSPGESSPAVSPNLSPGASPASSQSNSLTVPTPPGLDVCSGPPSPLPGAPPQKGDEAEVPSPHLGESNVLKGLADRKQNDQRTLSQGRLTARSPTVEKSKEITIEQKENFDPLQRPEAIPKGPASGPGSGGKMALNSPQPGPVESELGKPLAKTAKEGNPLPRGPTQGSGGVAPQASQGKSTVGEPAGSKVGSKAELWPPTSRPPLLRGVSWDSGPEEPGPRLQKVLAKLPLAEEEKRFTGKAGSKLAKAPGLKDFQIQVQPVRMQKLTKLREEHILLRNQNLVGLKLPELSEAAEQEKGHPSELSSAIEEEESKGGLDVMPNISDVLLRKLRVHKSLPGSAPPLTEKEVENVFVQLSLAFRNDSYTLESRINQAERERNLTEENTEKELENFKASITSSASLWHHCEHRETYQKLLEDIAVLHRLAARLSSRAEMVGAVRQEKRMSKATEVMMQYVENLKRTYEKDHAELMEFKKLANQNSSRSCGPSEDGVPRTARSMSLSLGKNMPRRRVSVAVVPKFNILNLPGQSPSSSPIPSLPALSESSNGKGNPPVSSALPALLENGKTNGDPDCEASASVPTPSCLEGISQEAKARMEEEAYNKGYQEGLKKTKELQGLREEEEEQKSESPEEPEEVAETEEEEKEQRSSKLEELVHFLQVMYPKLCQHWQVIWMMAAAMLVLTVVLGLYGSHNSCVEQADGSLGKSTCSAAQRDSWWSSGLQHEQPTEQ.

A compositionally biased stretch (basic and acidic residues) spans Met1–Leu11. 4 disordered regions span residues Met1–Val21, Glu39–Leu122, Leu174–Leu405, and Glu478–Gly498. Residues Ala68 to Pro86 show a composition bias toward polar residues. The segment covering His111–Leu122 has biased composition (basic residues). Ser118 is modified (phosphoserine). An interaction with PRKG1 region spans residues Ser152–Ser184. Polar residues predominate over residues Ser183–Val212. Residues Thr277–Phe292 show a composition bias toward basic and acidic residues. Phosphoserine is present on Ser393. The segment at Asn534–Thr580 is interaction with ITPR1. The stretch at Ser547 to Thr645 forms a coiled coil. Ser683 and Ser696 each carry phosphoserine. 2 disordered regions span residues Leu706–Cys766 and Tyr787–Arg829. A compositionally biased stretch (low complexity) spans Leu708–Ser728. Positions Gly790–Arg801 are enriched in basic and acidic residues. Positions Glu802–Glu825 are enriched in acidic residues. The helical transmembrane segment at Val853–Ser873 threads the bilayer.

Interacts with PRKG1/cGKI-beta and ITPR1/IP3R type I. Part of cGMP kinase signaling complex at least composed of ACTA2/alpha-actin, CNN1/calponin H1, PLN/phospholamban, PRKG1 and ITPR1. Interacts with HCN4; regulates HCN4 channel activity. In terms of processing, phosphorylated by PRKG1/cGKI-beta. Phosphorylation at Ser-696 is necessary for PRKG1-induced calcium release in the cytosol. In terms of tissue distribution, highly expressed in trachea, aorta and uterus.

It localises to the sarcoplasmic reticulum. The protein resides in the cytoplasm. The protein localises to the perinuclear region. It is found in the membrane. Its function is as follows. Plays a role as NO/PRKG1-dependent regulator of IP3-induced calcium release; its phosphorylation by PRKG1 inhibits bradykinin and IP3-induced calcium release from intracellular stores. Recruits PRKG1 to the endoplasmic reticulum and may mediate the assembly of PRKG1 and ITPR1 in a macrocomplex. Involved in PRKG1 signaling cascade leading to inhibition of platelet activation and aggregation. Also mediates NO-dependent inhibition of calcium signaling in gastrointestinal smooth muscle contributing to NO-dependent relaxation. Plays a role in the regulation of cellular excitability by regulating the hyperpolarization-activated cyclic nucleotide-gated HCN4 channel activity. This Bos taurus (Bovine) protein is Inositol 1,4,5-triphosphate receptor associated 1 (IRAG1).